Consider the following 623-residue polypeptide: uncharacterized protein (623 aa).

Residues 1–18 (MSSRSGSADTFTQRSDSN) are compositionally biased toward polar residues. Disordered stretches follow at residues 1-107 (MSSR…DPFT), 132-181 (LGSD…EIGA), 207-231 (SWNL…ADTD), 298-349 (REET…ESDQ), 384-464 (RKSV…DRNV), 533-553 (SIND…PPET), and 568-623 (VESR…TKGD). Residues 25-34 (ISLDDVRDNN) are compositionally biased toward basic and acidic residues. A compositionally biased stretch (low complexity) spans 39–49 (SSSGISTTGSS). The segment covering 132 to 144 (LGSDTARPTSNGG) has biased composition (polar residues). The segment covering 165–177 (STSTWGPSGPTTP) has biased composition (low complexity). A compositionally biased stretch (polar residues) spans 328–339 (EKSTFSRISEQP). Residues 400 to 417 (QTPTISTASSPIQPSSSP) are compositionally biased toward low complexity. A compositionally biased stretch (polar residues) spans 533 to 548 (SINDLQQGTSSSQNQA). Residues 604–614 (PSASPSTSRTR) show a composition bias toward low complexity.

This is an uncharacterized protein from Emericella nidulans (strain FGSC A4 / ATCC 38163 / CBS 112.46 / NRRL 194 / M139) (Aspergillus nidulans).